We begin with the raw amino-acid sequence, 426 residues long: Glutamyl-tRNA reductase (426 aa).

Residues 51–54 (TCNR), serine 110, 115–117 (EAQ), and glutamine 121 each bind substrate. Cysteine 52 (nucleophile) is an active-site residue. 190–195 (GAGEMA) contacts NADP(+).

Belongs to the glutamyl-tRNA reductase family. In terms of assembly, homodimer.

The catalysed reaction is (S)-4-amino-5-oxopentanoate + tRNA(Glu) + NADP(+) = L-glutamyl-tRNA(Glu) + NADPH + H(+). It participates in porphyrin-containing compound metabolism; protoporphyrin-IX biosynthesis; 5-aminolevulinate from L-glutamyl-tRNA(Glu): step 1/2. Its function is as follows. Catalyzes the NADPH-dependent reduction of glutamyl-tRNA(Glu) to glutamate 1-semialdehyde (GSA). The sequence is that of Glutamyl-tRNA reductase from Desulfotalea psychrophila (strain LSv54 / DSM 12343).